Reading from the N-terminus, the 332-residue chain is mRNA-decapping enzyme 1 (332 aa).

Positions 141–173 are enriched in low complexity; the sequence is ARAAKAASEAPQASVPAPTQAPAAPAQAPQMAP. The interval 141 to 175 is disordered; that stretch reads ARAAKAASEAPQASVPAPTQAPAAPAQAPQMAPQA.

Belongs to the DCP1 family. In terms of assembly, may be a component of the decapping complex composed of dcap-1 and dcap-2. As to expression, expressed in neurons including touch receptor neurons and motor neurons.

Its subcellular location is the cytoplasm. The protein resides in the cytoplasmic granule. Component of the decapping complex necessary for the degradation of mRNAs, both in normal mRNA turnover and in nonsense-mediated mRNA decay. In contrast to orthologs, does not possess decapping activity and does not remove the 7-methyl guanine cap structure from mRNA molecules. In the nervous system, negatively regulates the expression of insulin-like peptide ins-7, which in turn promotes longevity. This may in part be through promoting the activity of daf-16 in distal tissues. Required for the developmental axon guidance and regrowth of PLM touch receptor neurons. In ADL sensory neurons, plays a role in ciliary shape formation. Acts in neurons to promote larval survival at high temperatures by negatively regulating lin-14 expression. This is mRNA-decapping enzyme 1 from Caenorhabditis elegans.